The sequence spans 132 residues: NADPH-dependent 7-cyano-7-deazaguanine reductase (132 aa).

Cys-48 acts as the Thioimide intermediate in catalysis. Catalysis depends on Asp-55, which acts as the Proton donor. Residues 70–72 (LEL) and 89–90 (ME) contribute to the substrate site.

This sequence belongs to the GTP cyclohydrolase I family. QueF type 1 subfamily.

It is found in the cytoplasm. The catalysed reaction is 7-aminomethyl-7-carbaguanine + 2 NADP(+) = 7-cyano-7-deazaguanine + 2 NADPH + 3 H(+). It participates in tRNA modification; tRNA-queuosine biosynthesis. Functionally, catalyzes the NADPH-dependent reduction of 7-cyano-7-deazaguanine (preQ0) to 7-aminomethyl-7-deazaguanine (preQ1). This Elusimicrobium minutum (strain Pei191) protein is NADPH-dependent 7-cyano-7-deazaguanine reductase.